A 551-amino-acid polypeptide reads, in one-letter code: Protein GPR107 (551 aa).

The N-terminal stretch at 1-33 is a signal peptide; sequence MAVPVPLGRFGSFCLRLLRLLALLELLVHPVLG. Residues 40–262 lie on the Extracellular side of the membrane; it reads LKDDVRHKVH…YLSAGEIPLP (223 aa). N-linked (GlcNAc...) asparagine glycans are attached at residues asparagine 64 and asparagine 209. The cysteines at positions 106 and 226 are disulfide-linked. Residues 263 to 283 traverse the membrane as a helical segment; the sequence is KLYVSMALFFFLSGTIWIHIL. At 284-292 the chain is on the cytoplasmic side; that stretch reads RKRRNDVFK. The helical transmembrane segment at 293 to 313 threads the bilayer; the sequence is IHWLMAALPFTKSLSLVFHAI. Residues 314 to 336 lie on the Extracellular side of the membrane; the sequence is DYHYISSQGFPIEGWAVVYYITH. Residues 337–357 form a helical membrane-spanning segment; it reads LLKGALLFITIALIGTGWAFI. Over 358–367 the chain is Cytoplasmic; the sequence is KHILSDKDKK. Residues 368-388 traverse the membrane as a helical segment; it reads IFMIVIPLQVLANVAYIIIES. Residues 389-401 are Extracellular-facing; it reads TEEGTTEYGLWKD. Residues 402–422 form a helical membrane-spanning segment; the sequence is SLFLVDLLCCGAILFPVVWSI. Residues 423-449 lie on the Cytoplasmic side of the membrane; the sequence is RHLQEASATDGKAAINLAKLRLFRHYY. The chain crosses the membrane as a helical span at residues 450–470; that stretch reads VLIVCYIYFTRIIAFLLKFAV. Residues 471-475 lie on the Extracellular side of the membrane; that stretch reads PFQWK. A helical transmembrane segment spans residues 476–495; that stretch reads WLYQLLDETATLVFFVLTGY. Residues 496–551 are Cytoplasmic-facing; that stretch reads KFRPASDNPYLQLSQEDDDLEMESVVTTSGVMENMKKVKKVSNGAVEPQGSWEGTA. The residue at position 537 (serine 537) is a Phosphoserine.

Belongs to the LU7TM family. In terms of processing, cleaved by FURIN to yield two fragments that remain associated via a disulfide bond.

Its subcellular location is the cell membrane. It is found in the golgi apparatus. It localises to the trans-Golgi network membrane. Has been proposed to act as a receptor for neuronostatin, a peptide derived from the somatostatin/SST precursor. Involved in blood sugar regulation through the induction of glucagon in response to low glucose. The protein is Protein GPR107 (Gpr107) of Mus musculus (Mouse).